The primary structure comprises 325 residues: Probable tRNA-dihydrouridine synthase 2 (325 aa).

An FMN-binding site is contributed by 18-20 (PME). Residue Cys105 is the Proton donor of the active site. Residues Lys143, 208-210 (NGD), and 232-233 (GR) contribute to the FMN site.

Belongs to the Dus family. The cofactor is FMN.

It carries out the reaction a 5,6-dihydrouridine in tRNA + NAD(+) = a uridine in tRNA + NADH + H(+). The enzyme catalyses a 5,6-dihydrouridine in tRNA + NADP(+) = a uridine in tRNA + NADPH + H(+). Catalyzes the synthesis of 5,6-dihydrouridine (D), a modified base found in the D-loop of most tRNAs, via the reduction of the C5-C6 double bond in target uridines. This is Probable tRNA-dihydrouridine synthase 2 (dus2) from Bacillus subtilis (strain 168).